The following is a 264-amino-acid chain: 3-methyl-2-oxobutanoate hydroxymethyltransferase (264 aa).

Asp45 and Asp84 together coordinate Mg(2+). 3-methyl-2-oxobutanoate is bound by residues 45 to 46, Asp84, and Lys112; that span reads DS. A Mg(2+)-binding site is contributed by Glu114. Glu181 serves as the catalytic Proton acceptor.

It belongs to the PanB family. In terms of assembly, homodecamer; pentamer of dimers. Requires Mg(2+) as cofactor.

The protein localises to the cytoplasm. It catalyses the reaction 3-methyl-2-oxobutanoate + (6R)-5,10-methylene-5,6,7,8-tetrahydrofolate + H2O = 2-dehydropantoate + (6S)-5,6,7,8-tetrahydrofolate. It functions in the pathway cofactor biosynthesis; (R)-pantothenate biosynthesis; (R)-pantoate from 3-methyl-2-oxobutanoate: step 1/2. Its function is as follows. Catalyzes the reversible reaction in which hydroxymethyl group from 5,10-methylenetetrahydrofolate is transferred onto alpha-ketoisovalerate to form ketopantoate. The sequence is that of 3-methyl-2-oxobutanoate hydroxymethyltransferase from Shewanella piezotolerans (strain WP3 / JCM 13877).